Consider the following 212-residue polypeptide: Amelotin (212 aa).

Residues 1 to 16 (MKTVVLLLCLLGSAQS) form the signal peptide. Disordered stretches follow at residues 23–42 (PALG…PLTQ) and 141–212 (PSGQ…NRTK). 2 stretches are compositionally biased toward polar residues: residues 33-42 (TPGQVTPLTQ) and 165-178 (PANQ…TTPA).

Belongs to the amelotin family. Post-translationally, O-glycosylated. Phosphorylated by FAM20C in vitro. As to expression, highest expression in the mandible. Found in the basal lamina of maturation stage ameloblasts of incisors and unerupted molars. Also found in the internal basal lamina of junctional epithelium in molars.

It is found in the secreted. Is a promoter of calcium phosphate mineralization, playing a critical role in the formation of the compact, mineralized, aprismatic enamel surface layer during the maturation stage of amelogenesis. The sequence is that of Amelotin from Rattus norvegicus (Rat).